The chain runs to 55 residues: Riparin-1.4 (55 aa).

The signal sequence occupies residues 1-15 (MKIIVVLAVLMLVSA). The propeptide occupies 16–41 (QVCLVSAAEMGHSSDNELSSRDLVKR). C47 and C53 form a disulfide bridge. Positions 54–55 (NH) are excised as a propeptide.

In terms of tissue distribution, expressed by the skin glands.

The protein localises to the secreted. The protein is Riparin-1.4 of Crinia riparia (Streambank froglet).